Reading from the N-terminus, the 153-residue chain is Putative tRNA (cytidine(34)-2'-O)-methyltransferase (153 aa).

Glycine 102, isoleucine 122, and serine 131 together coordinate S-adenosyl-L-methionine.

This sequence belongs to the class IV-like SAM-binding methyltransferase superfamily. RNA methyltransferase TrmH family. TrmL subfamily.

It is found in the cytoplasm. It carries out the reaction cytidine(34) in tRNA + S-adenosyl-L-methionine = 2'-O-methylcytidine(34) in tRNA + S-adenosyl-L-homocysteine + H(+). The enzyme catalyses 5-carboxymethylaminomethyluridine(34) in tRNA(Leu) + S-adenosyl-L-methionine = 5-carboxymethylaminomethyl-2'-O-methyluridine(34) in tRNA(Leu) + S-adenosyl-L-homocysteine + H(+). Its function is as follows. Could methylate the ribose at the nucleotide 34 wobble position in tRNA. This is Putative tRNA (cytidine(34)-2'-O)-methyltransferase from Synechocystis sp. (strain ATCC 27184 / PCC 6803 / Kazusa).